The sequence spans 341 residues: Anthranilate phosphoribosyltransferase (341 aa).

5-phospho-alpha-D-ribose 1-diphosphate contacts are provided by residues Gly79, 82–83 (GD), Thr87, 89–92 (NIST), 107–115 (KHGNRAVSS), and Ser119. Gly79 is an anthranilate binding site. Ser91 lines the Mg(2+) pocket. Asn110 lines the anthranilate pocket. An anthranilate-binding site is contributed by Arg165. Asp224 and Glu225 together coordinate Mg(2+).

The protein belongs to the anthranilate phosphoribosyltransferase family. In terms of assembly, homodimer. The cofactor is Mg(2+).

The enzyme catalyses N-(5-phospho-beta-D-ribosyl)anthranilate + diphosphate = 5-phospho-alpha-D-ribose 1-diphosphate + anthranilate. It functions in the pathway amino-acid biosynthesis; L-tryptophan biosynthesis; L-tryptophan from chorismate: step 2/5. In terms of biological role, catalyzes the transfer of the phosphoribosyl group of 5-phosphorylribose-1-pyrophosphate (PRPP) to anthranilate to yield N-(5'-phosphoribosyl)-anthranilate (PRA). The chain is Anthranilate phosphoribosyltransferase from Bacillus cereus (strain ATCC 14579 / DSM 31 / CCUG 7414 / JCM 2152 / NBRC 15305 / NCIMB 9373 / NCTC 2599 / NRRL B-3711).